Here is a 591-residue protein sequence, read N- to C-terminus: Probable LRR receptor-like serine/threonine-protein kinase At1g69990 (591 aa).

The first 18 residues, 1-18 (MKTISIFFVIILMSSSHA), serve as a signal peptide directing secretion. The Extracellular portion of the chain corresponds to 19 to 218 (EDDVLCLKGF…GKNLTIIVTA (200 aa)). N-linked (GlcNAc...) asparagine glycosylation is present at Asn-46. 5 LRR repeats span residues 66–88 (RILS…LKLC), 90–111 (SLQS…QICS), 115–137 (YLVT…IVDC), 139–162 (FLNS…TRLN), and 163–185 (RLQR…LSHY). Asn-211 carries N-linked (GlcNAc...) asparagine glycosylation. Residues 219-239 (GVIGAVGSLCVGFGMFWWFFI) traverse the membrane as a helical segment. The Cytoplasmic segment spans residues 240 to 591 (RDRRKMNNYG…LIFNKQEHLK (352 aa)). Residue Thr-292 is modified to Phosphothreonine. The region spanning 295–573 (FDSGNIVVSS…KNLGDQHGFF (279 aa)) is the Protein kinase domain. Residues 301–309 (VVSSRSGVS) and Lys-323 each bind ATP. Residue Ser-378 is modified to Phosphoserine. A Phosphothreonine modification is found at Thr-389. Tyr-463 is subject to Phosphotyrosine. Phosphoserine is present on Ser-465. Phosphothreonine is present on Thr-466. A Phosphoserine modification is found at Ser-470.

It belongs to the protein kinase superfamily. Ser/Thr protein kinase family.

It is found in the membrane. The enzyme catalyses L-seryl-[protein] + ATP = O-phospho-L-seryl-[protein] + ADP + H(+). It carries out the reaction L-threonyl-[protein] + ATP = O-phospho-L-threonyl-[protein] + ADP + H(+). This Arabidopsis thaliana (Mouse-ear cress) protein is Probable LRR receptor-like serine/threonine-protein kinase At1g69990.